We begin with the raw amino-acid sequence, 528 residues long: Capsule biosynthesis protein CapD proenzyme (528 aa).

A signal peptide spans Met1 to Ser26. The active-site Nucleophile is the Thr352. Residues Thr352, Gly429–Arg432, and Arg520 contribute to the poly-gamma-D-glutamate site.

The protein belongs to the gamma-glutamyltransferase family. This enzyme consists of two polypeptide chains, which are synthesized in precursor form from a single polypeptide. Cleaved by autocatalysis into a large and a small subunit.

The protein operates within capsule biogenesis; capsule polysaccharide biosynthesis. Functionally, transpeptidase that cleaves the poly-gamma-D-glutamate capsule and catalyzes the formation of an amide bond with the side-chain amino group of meso-diaminopimelic acid (m-DAP) in the peptidoglycan scaffold. Degradation of the high-molecular weight capsule (H-capsule) to the lower-molecular weight capsule (L-capsule), which is released from the bacterial cell surface. The production of L-capsule is essential to mediate escape from host defenses. The protein is Capsule biosynthesis protein CapD proenzyme (capD) of Bacillus anthracis.